A 1107-amino-acid chain; its full sequence is Rho GTPase-activating protein 39 (1107 aa).

Positions 1–21 are disordered; it reads MSQAQDYECRSHHVDEQEPRI. Residue Ser2 is modified to N-acetylserine. A compositionally biased stretch (basic and acidic residues) spans 7-19; sequence YECRSHHVDEQEP. WW domains are found at residues 25–58 and 63–97; these read STRL…PPAG and RTSE…RPQN. Polar residues predominate over residues 111-122; the sequence is QNTESPRASADN. 4 disordered regions span residues 111–173, 218–267, 282–311, and 326–370; these read QNTE…PPGV, PSFL…PERR, SPLL…LYEE, and MDVQ…LMRT. The span at 123-136 shows a compositional bias: low complexity; the sequence is SPGRGSRDGSTGSS. Over residues 242-254 the composition is skewed to polar residues; it reads SGSQHSPNLQTFV. Position 282 is a phosphoserine (Ser282). 2 stretches are compositionally biased toward polar residues: residues 331 to 343 and 353 to 369; these read EANS…SPQR and LQTT…QLMR. Ser380, Ser384, Ser402, and Ser403 each carry phosphoserine. Disordered stretches follow at residues 404-429, 441-529, and 563-585; these read PKLR…QPSP, SGDY…RASL, and MKQR…GAVP. Polar residues predominate over residues 470–484; it reads SWSSQQDTMSSTGYS. 4 positions are modified to phosphoserine: Ser597, Ser683, Ser708, and Ser719. The 153-residue stretch at 715–867 folds into the MyTH4 domain; sequence WSSESIKKPM…PYVEEPDGVA (153 aa). In terms of domain architecture, Rho-GAP spans 914-1102; that stretch reads SALQEVMSMQ…VLIQHLDTSF (189 aa).

The protein localises to the nucleus. This chain is Rho GTPase-activating protein 39 (Arhgap39), found in Mus musculus (Mouse).